A 72-amino-acid polypeptide reads, in one-letter code: Translation initiation factor IF-1 (72 aa).

The S1-like domain occupies 1-72 (MAKDDVIEVE…TRGRITYRYK (72 aa)). At Tyr-60 the chain carries Phosphotyrosine.

Belongs to the IF-1 family. Component of the 30S ribosomal translation pre-initiation complex which assembles on the 30S ribosome in the order IF-2 and IF-3, IF-1 and N-formylmethionyl-tRNA(fMet); mRNA recruitment can occur at any time during PIC assembly.

Its subcellular location is the cytoplasm. Functionally, one of the essential components for the initiation of protein synthesis. Stabilizes the binding of IF-2 and IF-3 on the 30S subunit to which N-formylmethionyl-tRNA(fMet) subsequently binds. Helps modulate mRNA selection, yielding the 30S pre-initiation complex (PIC). Upon addition of the 50S ribosomal subunit IF-1, IF-2 and IF-3 are released leaving the mature 70S translation initiation complex. This Geobacillus thermodenitrificans (strain NG80-2) protein is Translation initiation factor IF-1.